Consider the following 188-residue polypeptide: Guanylate kinase (188 aa).

The Guanylate kinase-like domain occupies 2-183; it reads TKLIIISAPS…CVEQIRKAIA (182 aa). 9-16 lines the ATP pocket; it reads APSGTGKS.

This sequence belongs to the guanylate kinase family.

Its subcellular location is the cytoplasm. It catalyses the reaction GMP + ATP = GDP + ADP. Essential for recycling GMP and indirectly, cGMP. The chain is Guanylate kinase from Porphyromonas gingivalis (strain ATCC BAA-308 / W83).